The following is a 419-amino-acid chain: Creatine kinase S-type, mitochondrial (419 aa).

Residues 1–39 (MASAFSKLLTGRNASLLFTTLGTSALTTGYLLNRQKVSA) constitute a mitochondrion transit peptide. The cardiolipin-binding stretch occupies residues 40 to 64 (DAREQHKLFPPSADYPDLRKHNNCM). The region spanning 46-132 (KLFPPSADYP…FDPVIKLRHN (87 aa)) is the Phosphagen kinase N-terminal domain. In terms of domain architecture, Phosphagen kinase C-terminal spans 159-401 (YVLSSRVRTG…NYLVDCEKKL (243 aa)). ATP is bound by residues 162–166 (SSRVR) and histidine 225. The residue at position 255 (tyrosine 255) is a Phosphotyrosine. Residues arginine 270, arginine 326, 354 to 359 (RGTGGV), and aspartate 369 contribute to the ATP site. Phosphothreonine is present on threonine 356.

Belongs to the ATP:guanido phosphotransferase family. In terms of assembly, exists as an octamer composed of four CKMT2 homodimers.

The protein resides in the mitochondrion inner membrane. The enzyme catalyses creatine + ATP = N-phosphocreatine + ADP + H(+). Functionally, reversibly catalyzes the transfer of phosphate between ATP and various phosphogens (e.g. creatine phosphate). Creatine kinase isoenzymes play a central role in energy transduction in tissues with large, fluctuating energy demands, such as skeletal muscle, heart, brain and spermatozoa. The chain is Creatine kinase S-type, mitochondrial (Ckmt2) from Mus musculus (Mouse).